The sequence spans 315 residues: Heterodimeric geranylgeranyl pyrophosphate synthase small subunit 1, chloroplastic (315 aa).

Mg(2+) contacts are provided by Asp-124 and Gly-130. Dimethylallyl diphosphate-binding residues include Lys-228, Gln-265, and Lys-280.

The protein belongs to the FPP/GGPP synthase family. As to quaternary structure, part of a heterodimeric geranyl(geranyl)diphosphate synthase. Requires Mg(2+) as cofactor. As to expression, mainly expressed in trichomes, and, to a lower extent, in roots, leaves, flowers and stems.

The protein resides in the plastid. Its subcellular location is the chloroplast thylakoid membrane. It is found in the chloroplast. Functionally, heterodimeric geranyl(geranyl)-diphosphate (GPP) synthase small subunit. The small subunit alone is inactive in vitro while the large subunit GGPPS1 catalyzes mainly the production of geranygeranyl-diphosphate in vitro. Upon association of the two subunits, the product profile changes and the production of gerany-diphosphate is strongly increased. The protein is Heterodimeric geranylgeranyl pyrophosphate synthase small subunit 1, chloroplastic of Cannabis sativa (Hemp).